We begin with the raw amino-acid sequence, 319 residues long: MVVVTVARSNADVNEKKDERYWNYECYTITTGSIEKYQIYQRMGRGKYSEVFEGRKDREKIVIKALKPVRKAKICREVLILRNLSHKNIIKLMDVVVDPESQIYSLIFEYIEHEDYAKIFEKLCYKDIVEYSRQILSALSYCHSMGIIHRDIKPQNMVINQARRELKIIDWGLAEFYHPKKEYSVRVASRYYKGPELLVDYPYYDYSLDIWSFGCVLAELVFKKRPFFHGESNSDQLVKIARILGYTHLKKYVRKYKMAPLNPKYEGVGERVLLSSFTPPGKTGLYTNAIDLLEKILIYDHQDRPTADECLRHPLFESR.

The 280-residue stretch at 37 to 316 (YQIYQRMGRG…ADECLRHPLF (280 aa)) folds into the Protein kinase domain. ATP contacts are provided by residues 43–51 (MGRGKYSEV) and lysine 64. The active-site Proton acceptor is the aspartate 151.

The protein belongs to the protein kinase superfamily. Ser/Thr protein kinase family. CK2 subfamily. As to quaternary structure, tetramer composed of two alpha chains, one beta chain and one beta' chain.

The catalysed reaction is L-seryl-[protein] + ATP = O-phospho-L-seryl-[protein] + ADP + H(+). It catalyses the reaction L-threonyl-[protein] + ATP = O-phospho-L-threonyl-[protein] + ADP + H(+). In terms of biological role, catalytic subunit of a constitutively active serine/threonine-protein kinase complex that phosphorylates a large number of substrates containing acidic residues C-terminal to the phosphorylated serine or threonine. The protein is Probable casein kinase II subunit alpha homolog (CKA1) of Encephalitozoon cuniculi (strain GB-M1) (Microsporidian parasite).